A 202-amino-acid chain; its full sequence is Probable chemoreceptor glutamine deamidase CheD (202 aa).

This sequence belongs to the CheD family.

The enzyme catalyses L-glutaminyl-[protein] + H2O = L-glutamyl-[protein] + NH4(+). In terms of biological role, probably deamidates glutamine residues to glutamate on methyl-accepting chemotaxis receptors (MCPs), playing an important role in chemotaxis. This chain is Probable chemoreceptor glutamine deamidase CheD, found in Thiobacillus denitrificans (strain ATCC 25259 / T1).